A 705-amino-acid polypeptide reads, in one-letter code: Solute carrier family 12 member 8 (705 aa).

The next 11 membrane-spanning stretches (helical) occupy residues 38-58 (FGTW…VVLF), 69-89 (GVLL…ITVL), 92-112 (IGVA…ISSV), 121-141 (VGLL…TGFA), 159-179 (ISVA…KWII), 181-201 (LQLL…VGSF), 232-252 (FFTV…GFNM), 268-288 (LAAV…LGAV), 306-326 (LVGF…CMGG), 368-388 (LVTM…VVTI), and 390-410 (FMLT…AHCG). The disordered stretch occupies residues 472–512 (ESRQLGSREGNNPKNQKRKGKKGAKQTLQDSFLLDPGSPLS). The span at 486-495 (NQKRKGKKGA) shows a compositional bias: basic residues. A run of 2 helical transmembrane segments spans residues 587–607 (WVSL…QWLY) and 612–632 (MGVA…LYLG).

Belongs to the SLC12A transporter family.

It localises to the membrane. In terms of biological role, cation/chloride cotransporter that may play a role in the control of keratinocyte proliferation. This chain is Solute carrier family 12 member 8 (Slc12a8), found in Mus musculus (Mouse).